A 412-amino-acid polypeptide reads, in one-letter code: Propionate kinase (412 aa).

The protein belongs to the acetokinase family. PduW subfamily.

It is found in the cytoplasm. The catalysed reaction is propanoate + ATP = propanoyl phosphate + ADP. The protein operates within polyol metabolism; 1,2-propanediol degradation. Its function is as follows. Works with phosphate acetyltransferase (pta) to capture exogenous propionate and regenerate propionyl-CoA during degradation of 1,2-propanediol (1,2-PD). The chain is Propionate kinase from Yersinia enterocolitica serotype O:8 / biotype 1B (strain NCTC 13174 / 8081).